Here is a 387-residue protein sequence, read N- to C-terminus: UDP-Gal:alpha-D-GlcNAc-diphosphoundecaprenol alpha-1,3-galactosyltransferase (387 aa).

Belongs to the glycosyltransferase group 1 family. Glycosyltransferase 4 subfamily. Mg(2+) serves as cofactor. Mn(2+) is required as a cofactor. Requires Fe(2+) as cofactor.

It carries out the reaction N-acetyl-alpha-D-glucosaminyl-di-trans,octa-cis-undecaprenyl diphosphate + UDP-alpha-D-galactose = alpha-D-Gal-(1-&gt;3)-alpha-D-GlcNAc-di-trans,octa-cis-undecaprenyl diphosphate + UDP + H(+). It functions in the pathway bacterial outer membrane biogenesis; LPS O-antigen biosynthesis. Involved in the biosynthesis of the lipopolysaccharide (LPS) O-antigen region. Catalyzes the transfer of galactose from UDP-galactose to GlcNAc-undecaprenyl diphosphate via an alpha1,3-linkage. Has strict substrate specificity. The sequence is that of UDP-Gal:alpha-D-GlcNAc-diphosphoundecaprenol alpha-1,3-galactosyltransferase from Escherichia coli.